Consider the following 226-residue polypeptide: Small ribosomal subunit protein uS3 (226 aa).

One can recognise a KH type-2 domain in the interval 39–107 (VRKFLNKELR…PAQINISEVR (69 aa)).

The protein belongs to the universal ribosomal protein uS3 family. As to quaternary structure, part of the 30S ribosomal subunit. Forms a tight complex with proteins S10 and S14.

Functionally, binds the lower part of the 30S subunit head. Binds mRNA in the 70S ribosome, positioning it for translation. The chain is Small ribosomal subunit protein uS3 from Idiomarina loihiensis (strain ATCC BAA-735 / DSM 15497 / L2-TR).